The primary structure comprises 118 residues: MSTVQDYPSRLSRPESRKMGTFSYLPPMGEAEIRRQVEWIVKNGWNPGIEHTEPDFAAQIYWYMWKLPMFGETDVDAILAELKACHEANPGHHVRLIGYDNFTQSQGANMIVYRGTAV.

Belongs to the RuBisCO small chain family. As to quaternary structure, heterohexadecamer of 8 large and 8 small subunits.

Its function is as follows. RuBisCO catalyzes two reactions: the carboxylation of D-ribulose 1,5-bisphosphate, the primary event in carbon dioxide fixation, as well as the oxidative fragmentation of the pentose substrate. Both reactions occur simultaneously and in competition at the same active site. Although the small subunit is not catalytic it is essential for maximal activity. This chain is Ribulose bisphosphate carboxylase small subunit, found in Rhodobacter capsulatus (Rhodopseudomonas capsulata).